The sequence spans 204 residues: Dephospho-CoA kinase (204 aa).

One can recognise a DPCK domain in the interval 3–200 (VVAITGGIGS…ETYMAFASQQ (198 aa)). 11–16 (GSGKTT) contributes to the ATP binding site.

It belongs to the CoaE family.

It is found in the cytoplasm. It catalyses the reaction 3'-dephospho-CoA + ATP = ADP + CoA + H(+). The protein operates within cofactor biosynthesis; coenzyme A biosynthesis; CoA from (R)-pantothenate: step 5/5. Catalyzes the phosphorylation of the 3'-hydroxyl group of dephosphocoenzyme A to form coenzyme A. The sequence is that of Dephospho-CoA kinase from Aeromonas hydrophila.